The primary structure comprises 579 residues: Putative adenine deaminase OB0751 (579 aa).

It belongs to the metallo-dependent hydrolases superfamily. Adenine deaminase family.

The enzyme catalyses adenine + H2O + H(+) = hypoxanthine + NH4(+). This chain is Putative adenine deaminase OB0751, found in Oceanobacillus iheyensis (strain DSM 14371 / CIP 107618 / JCM 11309 / KCTC 3954 / HTE831).